The following is a 639-amino-acid chain: MPIQILPPQLANQIAAGEVVERPASVVKELVENSLDAGATRIDIDIERGGAKLIRIRDNGGGIGKAELALALARHATSKISTLDDLEAIVSLGFRGEALASISSVSRLTMTSRPEGQAEAWQAYAEGREMAVMVKPSAHPVGTTVEVLDLFYNTPARRKFLRTEKTEFAHIDEVVRRIALARFDITLTLQHNGKTVRQYRAVKEGDARERRLGAICGPVFVQHALALTWRHDELAIHGWVAAPQAIRQIGELQYCYVNGRMMRDRLITHAIRQAYQDRLSDEMPPAYVLYLEIDPRQVDVNVHPAKHEVRFHQARLVHDFIYQAVVEVLQQAQVASAHDDPTPAISGAARDEEPRGVENRASAGENRFNRPASSPVASAPRPAHVAAPRMPAGDIFRRREGELYQRLLAANPAPAAETDSAFVAAPGAPVTVAGPPAVAVSTAAENGAPGDSFGRVLTLCADGVALTECRSGVALVSLFHARRCLLRAQLQPPDEGLKAQPLLVPLRLTLEAAERQALKTQQPLLQQMGLRLQPERQHALLHAVPLPLRQQNLPRLIPQMLRYLATASVCDAASLADWLAAHWHSADEAPWTVAQAVQLLADLERLCPQLVQSPPRALLQPLDLQPGVDRLRQEEQLNE.

Residues serine 336–alanine 392 are disordered. Basic and acidic residues predominate over residues alanine 349–glutamate 358. Low complexity predominate over residues arginine 370–alanine 392.

Belongs to the DNA mismatch repair MutL/HexB family.

Functionally, this protein is involved in the repair of mismatches in DNA. It is required for dam-dependent methyl-directed DNA mismatch repair. May act as a 'molecular matchmaker', a protein that promotes the formation of a stable complex between two or more DNA-binding proteins in an ATP-dependent manner without itself being part of a final effector complex. The chain is DNA mismatch repair protein MutL from Edwardsiella ictaluri (strain 93-146).